Here is a 606-residue protein sequence, read N- to C-terminus: Sporulation kinase A (606 aa).

The PAS 1 domain occupies 3–73 (QDTQHVKPLQ…SYFYNEHHLM (71 aa)). The PAC 1 domain occupies 77–116 (FRFIKKDHTIVWVEAAVEIVTTRAERTEREIILKMKVLEE). The 75-residue stretch at 140–214 (YITDDYERLV…IRMQKGMEVG (75 aa)) folds into the PAS 2 domain. The PAC 2 domain occupies 218–255 (QTWKRLDGTPVHLEVKASPTVYKNQQAELLLLIDISSR). The 71-residue stretch at 265–335 (SRERYQLLIQ…ERIQNIAEQK (71 aa)) folds into the PAS 3 domain. The Histidine kinase domain occupies 402–606 (GIAHEIRNPL…TAFKISFPKK (205 aa)). The residue at position 405 (H405) is a Phosphohistidine; by autocatalysis.

The catalysed reaction is ATP + protein L-histidine = ADP + protein N-phospho-L-histidine.. Functionally, phosphorylates the sporulation-regulatory proteins spo0A and spo0F. It also autophosphorylates in the presence of ATP. This Bacillus subtilis (strain 168) protein is Sporulation kinase A (kinA).